The primary structure comprises 289 residues: 33 kDa chaperonin (289 aa).

Disulfide bonds link cysteine 229-cysteine 231 and cysteine 262-cysteine 265.

The protein belongs to the HSP33 family. Post-translationally, under oxidizing conditions two disulfide bonds are formed involving the reactive cysteines. Under reducing conditions zinc is bound to the reactive cysteines and the protein is inactive.

The protein resides in the cytoplasm. Functionally, redox regulated molecular chaperone. Protects both thermally unfolding and oxidatively damaged proteins from irreversible aggregation. Plays an important role in the bacterial defense system toward oxidative stress. This is 33 kDa chaperonin from Pectobacterium atrosepticum (strain SCRI 1043 / ATCC BAA-672) (Erwinia carotovora subsp. atroseptica).